A 271-amino-acid polypeptide reads, in one-letter code: Mannosyl-3-phosphoglycerate phosphatase (271 aa).

D13 acts as the Nucleophile in catalysis. D13, D15, and D214 together coordinate Mg(2+).

This sequence belongs to the HAD-like hydrolase superfamily. MPGP family. It depends on Mg(2+) as a cofactor.

The protein resides in the cytoplasm. The enzyme catalyses 2-O-(alpha-D-mannosyl)-3-phosphoglycerate + H2O = (2R)-2-O-(alpha-D-mannosyl)-glycerate + phosphate. This chain is Mannosyl-3-phosphoglycerate phosphatase, found in Escherichia coli O139:H28 (strain E24377A / ETEC).